The sequence spans 828 residues: Translation initiation factor IF-2 (828 aa).

Disordered stretches follow at residues 48-76 and 112-137; these read SYSG…SEEF and ASQE…EPKI. Residues 49-58 show a composition bias toward polar residues; sequence YSGSTTTLSL. Low complexity predominate over residues 65–74; it reads LETGSSSGSE. Positions 116–126 are enriched in acidic residues; the sequence is DPIEVEQEESS. The span at 127–137 shows a compositional bias: basic and acidic residues; sequence DTNKVKEEPKI. Residues 326 to 496 enclose the tr-type G domain; that stretch reads SRAPVVTVMG…LLIAEMQNLK (171 aa). Positions 335-342 are G1; that stretch reads GHVDHGKT. 335 to 342 lines the GTP pocket; the sequence is GHVDHGKT. The G2 stretch occupies residues 360-364; sequence GITQH. The tract at residues 382 to 385 is G3; the sequence is DTPG. GTP contacts are provided by residues 382-386 and 436-439; these read DTPGH and NKID. A G4 region spans residues 436-439; that stretch reads NKID. The interval 472-474 is G5; sequence SAL.

The protein belongs to the TRAFAC class translation factor GTPase superfamily. Classic translation factor GTPase family. IF-2 subfamily.

It is found in the cytoplasm. In terms of biological role, one of the essential components for the initiation of protein synthesis. Protects formylmethionyl-tRNA from spontaneous hydrolysis and promotes its binding to the 30S ribosomal subunits. Also involved in the hydrolysis of GTP during the formation of the 70S ribosomal complex. This Rickettsia bellii (strain RML369-C) protein is Translation initiation factor IF-2.